The primary structure comprises 124 residues: uncharacterized protein (124 aa).

3 consecutive transmembrane segments (helical) span residues 13-33 (LIQI…VLQL), 43-63 (GLFW…PEFF), and 71-91 (GVGR…FYLI).

To M.thermoautotrophicum MTH137.

The protein resides in the cell membrane. This is an uncharacterized protein from Methanocaldococcus jannaschii (strain ATCC 43067 / DSM 2661 / JAL-1 / JCM 10045 / NBRC 100440) (Methanococcus jannaschii).